Here is a 28-residue protein sequence, read N- to C-terminus: Cruzioseptin-10 (28 aa).

As to expression, expressed by the skin glands.

It localises to the secreted. Functionally, has antimicrobial activity. The sequence is that of Cruzioseptin-10 from Cruziohyla calcarifer (Splendid leaf frog).